The following is a 202-amino-acid chain: Coiled-coil domain-containing protein 85B (202 aa).

At methionine 1 the chain carries N-acetylmethionine. Coiled coils occupy residues arginine 44–cysteine 82 and glutamine 118–cysteine 141. Residues glycine 152–alanine 162 are compositionally biased toward gly residues. A disordered region spans residues glycine 152–aspartate 202. Low complexity predominate over residues aspartate 180 to serine 190.

Belongs to the CCDC85 family. As to quaternary structure, interacts with CEBPB. May interact with CEBPD. Interacts with EURL. Interacts with MCRS1. Interacts with TCF7L2; competes with CTNNB1. Interacts with ANKRD26. Interacts with the beta-catenin family proteins ARVCF, CTNND1, CTNND2 and PKP4. In terms of tissue distribution, expressed in white and brown adipose tissue.

The protein resides in the nucleus. The protein localises to the cytoplasm. It localises to the cytoskeleton. Its subcellular location is the microtubule organizing center. It is found in the centrosome. The protein resides in the cell junction. The protein localises to the adherens junction. Functionally, functions as a transcriptional repressor. May inhibit the activity of CTNNB1 in a TP53-dependent manner and thus regulate cell growth. May function in adipocyte differentiation, negatively regulating mitotic clonal expansion. Plays a role in cell-cell adhesion and epithelium development through its interaction with proteins of the beta-catenin family. This chain is Coiled-coil domain-containing protein 85B (Ccdc85b), found in Mus musculus (Mouse).